The chain runs to 227 residues: Ribosomal RNA large subunit methyltransferase E (227 aa).

Glycine 78, tryptophan 80, aspartate 103, aspartate 119, and aspartate 143 together coordinate S-adenosyl-L-methionine. Lysine 183 acts as the Proton acceptor in catalysis.

This sequence belongs to the class I-like SAM-binding methyltransferase superfamily. RNA methyltransferase RlmE family.

Its subcellular location is the cytoplasm. The enzyme catalyses uridine(2552) in 23S rRNA + S-adenosyl-L-methionine = 2'-O-methyluridine(2552) in 23S rRNA + S-adenosyl-L-homocysteine + H(+). Specifically methylates the uridine in position 2552 of 23S rRNA at the 2'-O position of the ribose in the fully assembled 50S ribosomal subunit. This Rickettsia felis (strain ATCC VR-1525 / URRWXCal2) (Rickettsia azadi) protein is Ribosomal RNA large subunit methyltransferase E.